A 531-amino-acid polypeptide reads, in one-letter code: Transcription factor LG2 (531 aa).

Disordered stretches follow at residues 115–154 and 195–220; these read RHQQ…ASSA and LHGG…KLVD. The span at 116–154 shows a compositional bias: polar residues; that stretch reads HQQQLHSGNSQSVGSTGTDSSSAQNTMSQMELVSPASSA. In terms of domain architecture, bZIP spans 220–264; that stretch reads DAKTERRLAQNREAARKSRLRKKAYVQQLETSRIRLQQVEHELQR. A basic motif region spans residues 222–242; it reads KTERRLAQNREAARKSRLRKK. The Nuclear localization signal signature appears at 224–231; sequence ERRLAQNR. Residues 248 to 262 form a leucine-zipper region; sequence LETSRIRLQQVEHEL. The region spanning 285–499 is the DOG1 domain; sequence AAMFDMEYAR…RALSNLWASR (215 aa).

This sequence belongs to the bZIP family. As to quaternary structure, binds DNA as a dimer. As to expression, expression in meristem/developing ligule regions.

Its subcellular location is the nucleus. Its function is as follows. Required for the formation of the blade-sheath boundary in leaves. Promotes flowering. This Zea mays (Maize) protein is Transcription factor LG2.